We begin with the raw amino-acid sequence, 189 residues long: Putative manganese efflux pump MntP (189 aa).

The next 6 membrane-spanning stretches (helical) occupy residues 3–23 (PVAT…AAIG), 41–61 (LIFG…GKAA), 62–82 (AQYV…VLGA), 104–124 (FWLL…VGAG), 132–152 (IYST…IGVM), and 168–188 (AGGI…LNIF).

The protein belongs to the MntP (TC 9.B.29) family.

The protein localises to the cell inner membrane. In terms of biological role, probably functions as a manganese efflux pump. The protein is Putative manganese efflux pump MntP of Paraburkholderia phytofirmans (strain DSM 17436 / LMG 22146 / PsJN) (Burkholderia phytofirmans).